The primary structure comprises 343 residues: Heat-inducible transcription repressor HrcA (343 aa).

The protein belongs to the HrcA family.

Its function is as follows. Negative regulator of class I heat shock genes (grpE-dnaK-dnaJ and groELS operons). Prevents heat-shock induction of these operons. This chain is Heat-inducible transcription repressor HrcA, found in Halalkalibacterium halodurans (strain ATCC BAA-125 / DSM 18197 / FERM 7344 / JCM 9153 / C-125) (Bacillus halodurans).